The sequence spans 194 residues: dCTP deaminase, dUMP-forming (194 aa).

DCTP contacts are provided by residues 104 to 109, D122, 130 to 132, Q151, Y165, K172, and Q176; these read RSSLGR and TLE. E132 functions as the Proton donor/acceptor in the catalytic mechanism.

It belongs to the dCTP deaminase family. As to quaternary structure, homotrimer.

The enzyme catalyses dCTP + 2 H2O = dUMP + NH4(+) + diphosphate. The protein operates within pyrimidine metabolism; dUMP biosynthesis; dUMP from dCTP: step 1/1. Functionally, bifunctional enzyme that catalyzes both the deamination of dCTP to dUTP and the hydrolysis of dUTP to dUMP without releasing the toxic dUTP intermediate. This is dCTP deaminase, dUMP-forming from Dictyoglomus thermophilum (strain ATCC 35947 / DSM 3960 / H-6-12).